The primary structure comprises 108 residues: Hrp pili protein HrpA (108 aa).

The segment covering asparagine 41 to serine 56 has biased composition (polar residues). The disordered stretch occupies residues asparagine 41–asparagine 73.

Belongs to the HrpA type 1 family.

It localises to the secreted. It is found in the fimbrium. In terms of biological role, major structural protein of the hrp pilus, which is a component of the type III secretion system (T3SS, Hrp secretion system) required for effector protein delivery, parasitism, and pathogenicity. The hrp pilus functions as a conduit for protein delivery into the host cell. Also, affects the expression of T3SS-associated genes. Required for full expression of genes that encode regulatory, secretion, and effector proteins of the T3SS. HrpA-mediated gene regulation apparently is through effect on the mRNA level of HrpR and HrpS. This Pseudomonas syringae pv. syringae protein is Hrp pili protein HrpA (hrpA).